A 443-amino-acid polypeptide reads, in one-letter code: Type I restriction enzyme HindI methylase subunit (443 aa).

Residues 117 to 122 (QYFTPK), 146 to 148 (SGG), and Glu-173 each bind S-adenosyl-L-methionine.

This sequence belongs to the N(4)/N(6)-methyltransferase family. As to quaternary structure, the type I restriction/modification system is composed of three polypeptides R, M and S; the restriction enzyme has stoichiometry R(2)M(2)S(1) while the methyltransferase is M(2)S(1).

It catalyses the reaction a 2'-deoxyadenosine in DNA + S-adenosyl-L-methionine = an N(6)-methyl-2'-deoxyadenosine in DNA + S-adenosyl-L-homocysteine + H(+). Functionally, the subtype gamma methyltransferase (M) subunit of a type I restriction enzyme. The M and S subunits together form a methyltransferase (MTase) that methylates adenosines in the sequence 5'-RAACN(5)TAG-3'. Methylation protects against cleavage by HindI. In the presence of the R subunit the complex can also act as an endonuclease, binding to the same target sequence but cutting the DNA some distance from this site. Whether the DNA is cut or modified depends on the methylation state of the target sequence. When the target site is unmodified, the DNA is cut. When the target site is hemimethylated, the complex acts as a maintenance MTase modifying the DNA so that both strands become methylated. After locating a non-methylated recognition site, the enzyme complex serves as a molecular motor that translocates DNA in an ATP-dependent manner until a collision occurs that triggers cleavage. The chain is Type I restriction enzyme HindI methylase subunit from Haemophilus influenzae (strain ATCC 51907 / DSM 11121 / KW20 / Rd).